Here is a 129-residue protein sequence, read N- to C-terminus: Small ribosomal subunit protein uS11 (129 aa).

It belongs to the universal ribosomal protein uS11 family. As to quaternary structure, part of the 30S ribosomal subunit. Interacts with proteins S7 and S18. Binds to IF-3.

Functionally, located on the platform of the 30S subunit, it bridges several disparate RNA helices of the 16S rRNA. Forms part of the Shine-Dalgarno cleft in the 70S ribosome. The protein is Small ribosomal subunit protein uS11 of Baumannia cicadellinicola subsp. Homalodisca coagulata.